Consider the following 375-residue polypeptide: tRNA-specific 2-thiouridylase MnmA (375 aa).

ATP is bound by residues 8–15 and methionine 34; that span reads GLSGGVDS. The segment at 104-106 is interaction with target base in tRNA; it reads NPD. Cysteine 109 acts as the Nucleophile in catalysis. Cysteine 109 and cysteine 205 are disulfide-bonded. Residue glycine 133 coordinates ATP. The tract at residues 155-157 is interaction with tRNA; the sequence is KDQ. The active-site Cysteine persulfide intermediate is the cysteine 205. Residues 313-314 form an interaction with tRNA region; the sequence is RY.

It belongs to the MnmA/TRMU family.

The protein localises to the cytoplasm. It catalyses the reaction S-sulfanyl-L-cysteinyl-[protein] + uridine(34) in tRNA + AH2 + ATP = 2-thiouridine(34) in tRNA + L-cysteinyl-[protein] + A + AMP + diphosphate + H(+). In terms of biological role, catalyzes the 2-thiolation of uridine at the wobble position (U34) of tRNA, leading to the formation of s(2)U34. The sequence is that of tRNA-specific 2-thiouridylase MnmA from Acholeplasma laidlawii (strain PG-8A).